Here is a 144-residue protein sequence, read N- to C-terminus: Cytochrome c oxidase subunit 4 isoform 1, mitochondrial (144 aa).

The Mitochondrial matrix segment spans residues 1–73 (SVVKSEDYAL…SFAEMNRGSN (73 aa)). Lys-4 carries the N6-acetyllysine; alternate modification. Lys-4 is subject to N6-succinyllysine; alternate. Phosphoserine is present on residues Ser-31 and Ser-33. Lys-35 carries the N6-acetyllysine; alternate modification. The residue at position 35 (Lys-35) is an N6-succinyllysine; alternate. At Lys-42 the chain carries N6-acetyllysine. The chain crosses the membrane as a helical span at residues 74–99 (EWKTVVGAAMFFIGFTAILIILEKRY). The Mitochondrial intermembrane segment spans residues 100 to 144 (VYGPLPHTFDKEWVAMQTKRMLDLKVNPVDGLASKWDYDKKEWKK).

Belongs to the cytochrome c oxidase IV family. In terms of assembly, component of the cytochrome c oxidase (complex IV, CIV), a multisubunit enzyme composed of 14 subunits. The complex is composed of a catalytic core of 3 subunits MT-CO1, MT-CO2 and MT-CO3, encoded in the mitochondrial DNA, and 11 supernumerary subunits COX4I, COX5A, COX5B, COX6A, COX6B, COX6C, COX7A, COX7B, COX7C, COX8 and NDUFA4, which are encoded in the nuclear genome. The complex exists as a monomer or a dimer and forms supercomplexes (SCs) in the inner mitochondrial membrane with NADH-ubiquinone oxidoreductase (complex I, CI) and ubiquinol-cytochrome c oxidoreductase (cytochrome b-c1 complex, complex III, CIII), resulting in different assemblies (supercomplex SCI(1)III(2)IV(1) and megacomplex MCI(2)III(2)IV(2)). Interacts with PHB2; the interaction decreases in absence of SPHK2. Interacts with AFG1L. Interacts with ABCB7; this interaction allows the regulation of cellular iron homeostasis and cellular reactive oxygen species (ROS) levels in cardiomyocytes. Interacts with FLVCR2; this interaction occurs in the absence of heme and is disrupted upon heme binding. Interacts with IRGC.

The protein localises to the mitochondrion inner membrane. It functions in the pathway energy metabolism; oxidative phosphorylation. Its function is as follows. Component of the cytochrome c oxidase, the last enzyme in the mitochondrial electron transport chain which drives oxidative phosphorylation. The respiratory chain contains 3 multisubunit complexes succinate dehydrogenase (complex II, CII), ubiquinol-cytochrome c oxidoreductase (cytochrome b-c1 complex, complex III, CIII) and cytochrome c oxidase (complex IV, CIV), that cooperate to transfer electrons derived from NADH and succinate to molecular oxygen, creating an electrochemical gradient over the inner membrane that drives transmembrane transport and the ATP synthase. Cytochrome c oxidase is the component of the respiratory chain that catalyzes the reduction of oxygen to water. Electrons originating from reduced cytochrome c in the intermembrane space (IMS) are transferred via the dinuclear copper A center (CU(A)) of subunit 2 and heme A of subunit 1 to the active site in subunit 1, a binuclear center (BNC) formed by heme A3 and copper B (CU(B)). The BNC reduces molecular oxygen to 2 water molecules using 4 electrons from cytochrome c in the IMS and 4 protons from the mitochondrial matrix. The sequence is that of Cytochrome c oxidase subunit 4 isoform 1, mitochondrial (COX4I1) from Aotus azarae (Azara's night monkey).